Reading from the N-terminus, the 301-residue chain is Protoheme IX farnesyltransferase 1 (301 aa).

9 helical membrane passes run 29–49 (VVALMLLTVLVGMCLAVPHAV), 51–71 (VQPLLAGMLGIAMMAGSAAAL), 101–121 (ALIFAASLGSLGFIVLYSLVN), 123–143 (LTAWLTFASLIGYALVYTAYL), 150–170 (NIVIGGLAGAMPPLLGWTAVT), 177–197 (ALLLVIIIFTWTPPHFWALAI), 223–243 (CILLYTVLLAIACLLPVLVGM), 244–264 (CGPVYFVCSSLLSTGFIYKAW), and 274–294 (LAMQVFRFSIYHLMLLFMALL).

Belongs to the UbiA prenyltransferase family. Protoheme IX farnesyltransferase subfamily.

It is found in the cell inner membrane. It catalyses the reaction heme b + (2E,6E)-farnesyl diphosphate + H2O = Fe(II)-heme o + diphosphate. Its pathway is porphyrin-containing compound metabolism; heme O biosynthesis; heme O from protoheme: step 1/1. Converts heme B (protoheme IX) to heme O by substitution of the vinyl group on carbon 2 of heme B porphyrin ring with a hydroxyethyl farnesyl side group. This chain is Protoheme IX farnesyltransferase 1, found in Shewanella baltica (strain OS195).